We begin with the raw amino-acid sequence, 579 residues long: Basic helix-loop-helix ARNT-like protein 2 (579 aa).

The segment at 1 to 198 (MEFPRKRRGR…SPREKPIDTK (198 aa)) is interaction with PER2. Positions 4 to 9 (PRKRRG) match the Nuclear localization signal motif. The tract at residues 40–61 (RTGVSAPSGIREAHSQMEKRRR) is disordered. A bHLH domain is found at 48-101 (GIREAHSQMEKRRRDKMNHLIQKLSSMIPPHIPTAHKLDKLSVLRRAVQYLRSL). The segment covering 50 to 59 (REAHSQMEKR) has biased composition (basic and acidic residues). Residues 118-128 (IQDKELSHLIL) carry the Nuclear export signal 1 motif. Positions 119–190 (QDKELSHLIL…KEQLSCDGSP (72 aa)) constitute a PAS 1 domain. Basic and acidic residues predominate over residues 186–196 (CDGSPREKPID). The disordered stretch occupies residues 186–213 (CDGSPREKPIDTKTSQVYSHPYTGRPRM). Lysine 226 participates in a covalent cross-link: Glycyl lysine isopeptide (Lys-Gly) (interchain with G-Cter in SUMO2 and SUMO3). Residue lysine 233 forms a Glycyl lysine isopeptide (Lys-Gly) (interchain with G-Cter in SUMO2) linkage. The 71-residue stretch at 296–366 (VPQKSGKINV…DKHKAVLQSK (71 aa)) folds into the PAS 2 domain. Residues 331 to 339 (LGYLPQELL) carry the Nuclear export signal 2 motif. A PAC domain is found at 371–414 (TDSYKFRVKDGAFVTLKSEWFSFTNPWTKELEYIVSVNTLVLGR). Residues 469–536 (RLHSSSPEDA…AHPHGPLPGD (68 aa)) form a disordered region.

In terms of assembly, component of the circadian core oscillator, which includes the CRY proteins, CLOCK, or NPAS2, BMAL1 or BMAL2, CSNK1D and/or CSNK1E, TIMELESS and the PER proteins. Interacts directly with CLOCK to form the BMAL2-CLOCK transactivator. Can form heterodimers or homodimers which interact directly with CLOCK to form the transcription activator. Interacts with NPAS2 and HIF1A. Interacts with PER2. Expressed in the suprachiasmatic nucleus (SCN).

It is found in the nucleus. Transcriptional activator which forms a core component of the circadian clock. The circadian clock, an internal time-keeping system, regulates various physiological processes through the generation of approximately 24 hour circadian rhythms in gene expression, which are translated into rhythms in metabolism and behavior. It is derived from the Latin roots 'circa' (about) and 'diem' (day) and acts as an important regulator of a wide array of physiological functions including metabolism, sleep, body temperature, blood pressure, endocrine, immune, cardiovascular, and renal function. Consists of two major components: the central clock, residing in the suprachiasmatic nucleus (SCN) of the brain, and the peripheral clocks that are present in nearly every tissue and organ system. Both the central and peripheral clocks can be reset by environmental cues, also known as Zeitgebers (German for 'timegivers'). The predominant Zeitgeber for the central clock is light, which is sensed by retina and signals directly to the SCN. The central clock entrains the peripheral clocks through neuronal and hormonal signals, body temperature and feeding-related cues, aligning all clocks with the external light/dark cycle. Circadian rhythms allow an organism to achieve temporal homeostasis with its environment at the molecular level by regulating gene expression to create a peak of protein expression once every 24 hours to control when a particular physiological process is most active with respect to the solar day. Transcription and translation of core clock components (CLOCK, NPAS2, BMAL1, BMAL2, PER1, PER2, PER3, CRY1 and CRY2) plays a critical role in rhythm generation, whereas delays imposed by post-translational modifications (PTMs) are important for determining the period (tau) of the rhythms (tau refers to the period of a rhythm and is the length, in time, of one complete cycle). A diurnal rhythm is synchronized with the day/night cycle, while the ultradian and infradian rhythms have a period shorter and longer than 24 hours, respectively. Disruptions in the circadian rhythms contribute to the pathology of cardiovascular diseases, cancer, metabolic syndromes and aging. A transcription/translation feedback loop (TTFL) forms the core of the molecular circadian clock mechanism. Transcription factors, CLOCK or NPAS2 and BMAL1 or BMAL2, form the positive limb of the feedback loop, act in the form of a heterodimer and activate the transcription of core clock genes and clock-controlled genes (involved in key metabolic processes), harboring E-box elements (5'-CACGTG-3') within their promoters. The core clock genes: PER1/2/3 and CRY1/2 which are transcriptional repressors form the negative limb of the feedback loop and interact with the CLOCK|NPAS2-BMAL1|BMAL2 heterodimer inhibiting its activity and thereby negatively regulating their own expression. This heterodimer also activates nuclear receptors NR1D1/2 and RORA/B/G, which form a second feedback loop and which activate and repress BMAL1 transcription, respectively. The CLOCK-BMAL2 heterodimer activates the transcription of SERPINE1/PAI1 and BHLHE40/DEC1. The polypeptide is Basic helix-loop-helix ARNT-like protein 2 (Bmal2) (Mus musculus (Mouse)).